The primary structure comprises 87 residues: Cell division topological specificity factor (87 aa).

It belongs to the MinE family.

Functionally, prevents the cell division inhibition by proteins MinC and MinD at internal division sites while permitting inhibition at polar sites. This ensures cell division at the proper site by restricting the formation of a division septum at the midpoint of the long axis of the cell. This chain is Cell division topological specificity factor, found in Aliivibrio fischeri (strain ATCC 700601 / ES114) (Vibrio fischeri).